A 605-amino-acid chain; its full sequence is MSNKQLVKPKTETKTEITTEQSQKLLQTMLTMSFGCLAFLRGLFPDDIFVDQRFVPEKVEKNYNKQNTSQNNSIKIKTLIRGKSAQADLLLDWLEKGVFKSIRLKCLKALSLGIFLEDPTDLLENYIFSFDYDEENNVNINVNLSGNKKGSKNADPENETISLLDSRRMVQQLMRRFIIITQSLEPLPQKKFLTMRLMFNDNVDEDYQPELFKDATFDKRATLKVPTNLDNDAIDVGTLNTKHHKVALSVLSAATSSMEKAGNTNFIRVDPFDLILQQQEENKLEESVPTKPQNFVTSQTTNVLGNLLNSSQASIQPTQFVSNNPVTGICSCECGLEVPKAATVLKTCKSCRKTLHGICYGNFLHSSIEKCFTCIFGPSLDTKWSKFQDLMMIRKVFRFLVRKKKGFPASITELIDSFINVEDQNNEVKERVAFALFVFFLDETLCLDNGGKPSQTIRYVTSSVLVDVKGIVIPNTRKQLNVNHEYKWHFTTSSPKAESFYQEVLPNSRKQVESWLQDITNLRKVYSEALSPSSTLQELDLNSSLPTQDPIISGQKRRRYDLDEYLEEDKSSVVNDTIKAKDFDESVPAKIRKISVSKKTLKSNW.

Residues 20 to 250 (EQSQKLLQTM…TKHHKVALSV (231 aa)) enclose the HORMA domain. A zinc finger spans residues 348-364 (CKSCRKTLHGICYGNFL).

The protein resides in the nucleus. It localises to the chromosome. In terms of biological role, probable constituent of the synaptonemal complex during meiosis. May interact with RED1. This chain is Meiosis-specific protein HOP1 (HOP1), found in Saccharomyces cerevisiae (strain ATCC 204508 / S288c) (Baker's yeast).